The chain runs to 632 residues: Protein EAP1 (632 aa).

Disordered stretches follow at residues 1 to 80, 149 to 204, and 248 to 313; these read MELN…KKNK, MGPP…DDEE, and KSKG…PSLS. 2 stretches are compositionally biased toward polar residues: residues 7–38 and 54–69; these read SIIS…SNLF and VESS…ATSG. Phosphoserine is present on Ser-30. Ser-281 and Ser-282 each carry phosphoserine. Positions 288–298 are enriched in basic and acidic residues; it reads NLKRQDKKEES. Ser-327 and Ser-344 each carry phosphoserine. The interval 347–378 is disordered; sequence SLPSLDNNNQVPSSNVSVVNNDGNSTPHQSGS. Low complexity predominate over residues 353 to 371; that stretch reads NNNQVPSSNVSVVNNDGNS. At Ser-387 the chain carries Phosphoserine. 2 disordered regions span residues 429–541 and 587–632; these read QHPP…PPPP and QGNF…KNIK. 440-447 lines the ATP pocket; sequence GLLNKGKS. The segment covering 474 to 486 has biased composition (pro residues); sequence PNFPQRMMPPPPG. Residues 492–505 show a composition bias toward basic and acidic residues; sequence KDSKDVNKKEDRQL. Composition is skewed to polar residues over residues 507–516, 590–603, and 610–621; these read QNKNPNGTRN, FPPN…SNSP, and INANGKNVTNQL.

As to quaternary structure, interacts with SMY2, SYH1 and eIF4E.

It localises to the cytoplasm. Its function is as follows. Can regulate translation through binding to eIF4E. Competes with eIF4G and p20 for binding to eIF4E in vivo and inhibits cap-dependent translation in vitro. Plays a role in cell growth and is implicated in the TOR signaling cascade. Functions independently of eIF4E to maintain genetic stability and to attenuate GCN4 translation upon TOR inactivation. The chain is Protein EAP1 (EAP1) from Saccharomyces cerevisiae (strain ATCC 204508 / S288c) (Baker's yeast).